The chain runs to 86 residues: Small ribosomal subunit protein uS17 (86 aa).

The protein belongs to the universal ribosomal protein uS17 family. Part of the 30S ribosomal subunit.

Its function is as follows. One of the primary rRNA binding proteins, it binds specifically to the 5'-end of 16S ribosomal RNA. This is Small ribosomal subunit protein uS17 from Desulfitobacterium hafniense (strain DSM 10664 / DCB-2).